The primary structure comprises 349 residues: 2-oxoglutarate-Fe(II) type oxidoreductase hxnY (349 aa).

Residues 178 to 282 (GVATMRMLHY…RYSIPFFFSG (105 aa)) enclose the Fe2OG dioxygenase domain. Positions 205, 207, and 263 each coordinate Fe cation. Residue arginine 273 participates in 2-oxoglutarate binding.

It belongs to the iron/ascorbate-dependent oxidoreductase family. It depends on Fe(2+) as a cofactor.

2-oxoglutarate-Fe(II) type oxidoreductase, part of the hnx cluster involved in the purine degradation. The nicotinate hydroxylase hnxS accepts nicotinate as a substrate and catalyzes the first step of nicotinate catabolism. The major facilitator-type transporters hxnP and hxnZ are probably involved in the uptake of nicotinate-derived metabolites, and the oxidoreductases hxnT and hxnY in the further metabolism of 6-OH nicotinic acid. The sequence is that of 2-oxoglutarate-Fe(II) type oxidoreductase hxnY from Emericella nidulans (strain FGSC A4 / ATCC 38163 / CBS 112.46 / NRRL 194 / M139) (Aspergillus nidulans).